A 98-amino-acid polypeptide reads, in one-letter code: Large ribosomal subunit protein uL23 (98 aa).

This sequence belongs to the universal ribosomal protein uL23 family. As to quaternary structure, part of the 50S ribosomal subunit. Contacts protein L29, and trigger factor when it is bound to the ribosome.

One of the early assembly proteins it binds 23S rRNA. One of the proteins that surrounds the polypeptide exit tunnel on the outside of the ribosome. Forms the main docking site for trigger factor binding to the ribosome. This chain is Large ribosomal subunit protein uL23, found in Rickettsia bellii (strain OSU 85-389).